A 101-amino-acid chain; its full sequence is Small ribosomal subunit protein uS14 (101 aa).

This sequence belongs to the universal ribosomal protein uS14 family. As to quaternary structure, part of the 30S ribosomal subunit. Contacts proteins S3 and S10.

Binds 16S rRNA, required for the assembly of 30S particles and may also be responsible for determining the conformation of the 16S rRNA at the A site. The chain is Small ribosomal subunit protein uS14 from Vibrio vulnificus (strain CMCP6).